A 163-amino-acid chain; its full sequence is Cyclic pyranopterin monophosphate synthase (163 aa).

Substrate-binding positions include 75 to 77 and 113 to 114; these read MCH and ME. The active site involves aspartate 128.

The protein belongs to the MoaC family. As to quaternary structure, homohexamer; trimer of dimers.

The catalysed reaction is (8S)-3',8-cyclo-7,8-dihydroguanosine 5'-triphosphate = cyclic pyranopterin phosphate + diphosphate. It participates in cofactor biosynthesis; molybdopterin biosynthesis. Functionally, catalyzes the conversion of (8S)-3',8-cyclo-7,8-dihydroguanosine 5'-triphosphate to cyclic pyranopterin monophosphate (cPMP). The polypeptide is Cyclic pyranopterin monophosphate synthase (Desulforapulum autotrophicum (strain ATCC 43914 / DSM 3382 / VKM B-1955 / HRM2) (Desulfobacterium autotrophicum)).